Reading from the N-terminus, the 496-residue chain is 1-aminocyclopropane-1-carboxylate synthase 4 (496 aa).

N6-(pyridoxal phosphate)lysine is present on Lys-300.

It belongs to the class-I pyridoxal-phosphate-dependent aminotransferase family. Pyridoxal 5'-phosphate serves as cofactor. In terms of tissue distribution, expressed in leaves. Expressed in shoots and leaf blades. Expressed at low levels in leaf sheaths.

It carries out the reaction S-adenosyl-L-methionine = 1-aminocyclopropane-1-carboxylate + S-methyl-5'-thioadenosine + H(+). It functions in the pathway alkene biosynthesis; ethylene biosynthesis via S-adenosyl-L-methionine; ethylene from S-adenosyl-L-methionine: step 1/2. Catalyzes the formation of 1-aminocyclopropane-1-carboxylate, a direct precursor of ethylene in higher plants. The polypeptide is 1-aminocyclopropane-1-carboxylate synthase 4 (Oryza sativa subsp. japonica (Rice)).